The following is a 196-amino-acid chain: Pyridoxal 5'-phosphate synthase subunit PdxT (196 aa).

An L-glutamine-binding site is contributed by 47-49; that stretch reads GES. Catalysis depends on Cys-79, which acts as the Nucleophile. L-glutamine contacts are provided by residues Arg-106 and 134–135; that span reads IR. Active-site charge relay system residues include His-170 and Glu-172.

The protein belongs to the glutaminase PdxT/SNO family. As to quaternary structure, in the presence of PdxS, forms a dodecamer of heterodimers. Only shows activity in the heterodimer.

The enzyme catalyses aldehydo-D-ribose 5-phosphate + D-glyceraldehyde 3-phosphate + L-glutamine = pyridoxal 5'-phosphate + L-glutamate + phosphate + 3 H2O + H(+). The catalysed reaction is L-glutamine + H2O = L-glutamate + NH4(+). The protein operates within cofactor biosynthesis; pyridoxal 5'-phosphate biosynthesis. Catalyzes the hydrolysis of glutamine to glutamate and ammonia as part of the biosynthesis of pyridoxal 5'-phosphate. The resulting ammonia molecule is channeled to the active site of PdxS. The polypeptide is Pyridoxal 5'-phosphate synthase subunit PdxT (Bacillus cereus (strain G9842)).